The primary structure comprises 155 residues: NADPH-dependent 7-cyano-7-deazaguanine reductase (155 aa).

Cys-53 acts as the Thioimide intermediate in catalysis. The Proton donor role is filled by Asp-60. Substrate-binding positions include 75–77 (VES) and 94–95 (HE).

It belongs to the GTP cyclohydrolase I family. QueF type 1 subfamily.

The protein resides in the cytoplasm. It carries out the reaction 7-aminomethyl-7-carbaguanine + 2 NADP(+) = 7-cyano-7-deazaguanine + 2 NADPH + 3 H(+). The protein operates within tRNA modification; tRNA-queuosine biosynthesis. Its function is as follows. Catalyzes the NADPH-dependent reduction of 7-cyano-7-deazaguanine (preQ0) to 7-aminomethyl-7-deazaguanine (preQ1). The protein is NADPH-dependent 7-cyano-7-deazaguanine reductase of Hyphomonas neptunium (strain ATCC 15444).